We begin with the raw amino-acid sequence, 251 residues long: uncharacterized protein (251 aa).

This is an uncharacterized protein from Haemophilus influenzae (strain ATCC 51907 / DSM 11121 / KW20 / Rd).